An 859-amino-acid chain; its full sequence is MLRGQAREEDSVVLIDMASPEAGNGCSYGSTAQASEAGKQQVAPSRVGSSAKPPIDFVLVWEEDLRNQENPTKDKTDTHEVWRETFLENLCLAGLKIDQHDVQDEAAAVHYILLRAPWAVLCYYAEDLRLKLPLQELPNQASNWSATLLEWLGIPNILLEHVPDTPPEYYSCQFKASKLQWFLGSDNQDTFFTSTKRHQILFEILAKTPYGHEKKGLFGIDQLLAEGVFSAAFPLHDGPFSAVPESSQVLGLIQRQVLFQHWARWGKWNKYQPLDHVRRYFGEKVALYFAWLGFYTGWLLPAAVVGTVVFLVGCFLVFSDIPTQELCHSSDSFDMCPLCSDCSFWLLSSACTLAQAGRLFDHGGTVFFSLFMALWAVLLLEYWKRKNATLAYRWDCSDYEDIEERPRPQFAATAPMTALNPITGEDEPYFPEKNRVRRMLAGSVVLLMMVAVVIMCLVSVILYRAVMAIIVSRSDNAFLSAWASRIASLTGSVVNLVFILILSKVYVLLAQVLTRWEMHRTQTEFEDAFTLKVFIFQFVNFYASPVYIAFFKGRFVGYPGNYHTLFGIRNEECPAGGCLSELAQELLVIMVGKQIINNVQEVLVPKLKGCWQKFSRGKKAGTGTHPAPWEADYELLPCEGLFHEYLEMVLQFGFVTIFVAACPLAPLFALLNNWVEIRLDARKFVCEYRRPVAERAQDIGIWFHILTGLTHLAVISNAFLLAFSSDFLPRVYYSWTHAPDLHGFLNFTLARAPPTFTSAHNRTCRYRAFRDDDGHYSPTYWTLLAIRLAFVIVFEHVVFSIGRVLDLLVPDIPESVEIKVKREYYLAKQALAENEALLGATGVKDDQPPSSEPSLGLPA.

The Cytoplasmic portion of the chain corresponds to 1–297 (MLRGQAREED…YFAWLGFYTG (297 aa)). Residues 25–50 (GCSYGSTAQASEAGKQQVAPSRVGSS) are disordered. The helical transmembrane segment at 298–318 (WLLPAAVVGTVVFLVGCFLVF) threads the bilayer. Residues 319-362 (SDIPTQELCHSSDSFDMCPLCSDCSFWLLSSACTLAQAGRLFDH) lie on the Extracellular side of the membrane. A helical transmembrane segment spans residues 363–383 (GGTVFFSLFMALWAVLLLEYW). Residues 384 to 441 (KRKNATLAYRWDCSDYEDIEERPRPQFAATAPMTALNPITGEDEPYFPEKNRVRRMLA) are Cytoplasmic-facing. A helical membrane pass occupies residues 442–462 (GSVVLLMMVAVVIMCLVSVIL). Residues 463–492 (YRAVMAIIVSRSDNAFLSAWASRIASLTGS) are Extracellular-facing. The chain crosses the membrane as a helical span at residues 493–513 (VVNLVFILILSKVYVLLAQVL). The Cytoplasmic portion of the chain corresponds to 514 to 530 (TRWEMHRTQTEFEDAFT). The chain crosses the membrane as a helical span at residues 531–551 (LKVFIFQFVNFYASPVYIAFF). The Extracellular portion of the chain corresponds to 552–651 (KGRFVGYPGN…FHEYLEMVLQ (100 aa)). The helical transmembrane segment at 652-672 (FGFVTIFVAACPLAPLFALLN) threads the bilayer. Residues 673–700 (NWVEIRLDARKFVCEYRRPVAERAQDIG) lie on the Cytoplasmic side of the membrane. A helical transmembrane segment spans residues 701-721 (IWFHILTGLTHLAVISNAFLL). The Extracellular portion of the chain corresponds to 722 to 780 (AFSSDFLPRVYYSWTHAPDLHGFLNFTLARAPPTFTSAHNRTCRYRAFRDDDGHYSPTY). Residues Asn746 and Asn761 are each glycosylated (N-linked (GlcNAc...) asparagine). A helical membrane pass occupies residues 781 to 801 (WTLLAIRLAFVIVFEHVVFSI). At 802-859 (GRVLDLLVPDIPESVEIKVKREYYLAKQALAENEALLGATGVKDDQPPSSEPSLGLPA) the chain is on the cytoplasmic side.

Belongs to the anoctamin family. As to expression, highly expressed in the stomach. Expressed at low levels in small intestine and large intestine.

The protein resides in the cell membrane. The protein localises to the endoplasmic reticulum. The catalysed reaction is a 1,2-diacyl-sn-glycero-3-phospho-L-serine(in) = a 1,2-diacyl-sn-glycero-3-phospho-L-serine(out). It carries out the reaction a beta-D-galactosyl-(1&lt;-&gt;1')-N-acylsphing-4-enine(out) = a beta-D-galactosyl-(1&lt;-&gt;1')-N-acylsphing-4-enine(in). It catalyses the reaction a 1,2-diacyl-sn-glycero-3-phosphocholine(in) = a 1,2-diacyl-sn-glycero-3-phosphocholine(out). Has calcium-dependent phospholipid scramblase activity; scrambles phosphatidylserine, phosphatidylcholine and galactosylceramide. Does not exhibit calcium-activated chloride channel (CaCC) activity. May play a role in cell-cell interactions. In Mus musculus (Mouse), this protein is Anoctamin-7 (Ano7).